The sequence spans 231 residues: CLAVATA3/ESR (CLE)-related protein 4B-1 (231 aa).

The first 21 residues, 1 to 21 (MATNTMLCLLILSVVLALAFA), serve as a signal peptide directing secretion. The tract at residues 21-83 (ATNKKGDEEP…SNLLPNNNWM (63 aa)) is required for secretion from the host cytoplasm to the host apoplasm. Residue Asn32 is glycosylated (N-linked (GlcNAc...) asparagine). Residues 116–231 (RKTGMHSQRH…APAGPDPIHH (116 aa)) are disordered. Basic and acidic residues-rich tracts occupy residues 125 to 137 (HHEE…EKRV) and 144 to 221 (PIHH…EKRG). An A-1 repeat occupies 127–135 (EETTLEQEK). The tract at residues 127-219 (EETTLEQEKR…HEETTFEQEK (93 aa)) is 5 X approximate repeat A. One copy of the CLE-1 repeat lies at 136-147 (RVAGAGPDPIHH). The segment at 136–231 (RVAGAGPDPI…APAGPDPIHH (96 aa)) is 5 X approximate repeat CLE. The stretch at 148-156 (QDTTLEQEK) is one A-2 repeat. One copy of the CLE-2 repeat lies at 157–168 (RAVPAGPDPKHH). The A-3 repeat unit spans residues 169-177 (EETTLEQEK). One copy of the CLE-3 repeat lies at 178–189 (RAVPAGPDPKHH). The stretch at 190 to 198 (EETTLEQEK) is one A-4 repeat. The CLE-4 repeat unit spans residues 199–210 (RAVPAGPDPKHH). The stretch at 211-219 (EETTFEQEK) is one A-5 repeat. The CLE-5 repeat unit spans residues 220 to 231 (RGAPAGPDPIHH).

Belongs to the CLV3/ESR signal peptide family. In terms of tissue distribution, highly expressed exclusively within the dorsal esophageal gland cell during syncytium formation in host plants.

The protein resides in the secreted. It is found in the host cytoplasm. Its subcellular location is the host extracellular space. The protein localises to the extracellular space. It localises to the apoplast. Mimics host plant CLE extracellular signal peptides that regulate cell fate. May play a role in the differentiation or division of feeding cells (syncytia) induced in plant roots during infection. This chain is CLAVATA3/ESR (CLE)-related protein 4B-1 (CLE-4B-1), found in Globodera rostochiensis (Golden nematode worm).